The chain runs to 908 residues: Protein translocase subunit SecA (908 aa).

Residues Q87, 105–109, and D494 contribute to the ATP site; that span reads GEGKT. Positions 871 to 908 are disordered; the sequence is QEFSGGNLNRSQSNGSSVTVTTSSGGGTERKTSRRRKR. Residues 874-884 are compositionally biased toward polar residues; sequence SGGNLNRSQSN.

It belongs to the SecA family. Monomer and homodimer. Part of the essential Sec protein translocation apparatus which comprises SecA, SecYEG and auxiliary proteins SecDF. Other proteins may also be involved.

It is found in the cell inner membrane. The protein resides in the cytoplasm. The enzyme catalyses ATP + H2O + cellular proteinSide 1 = ADP + phosphate + cellular proteinSide 2.. Functionally, part of the Sec protein translocase complex. Interacts with the SecYEG preprotein conducting channel. Has a central role in coupling the hydrolysis of ATP to the transfer of proteins into and across the cell membrane, serving as an ATP-driven molecular motor driving the stepwise translocation of polypeptide chains across the membrane. The sequence is that of Protein translocase subunit SecA from Leptospira interrogans serogroup Icterohaemorrhagiae serovar Lai (strain 56601).